Reading from the N-terminus, the 267-residue chain is Protein TIFY 7 (267 aa).

Positions 113–148 (SSGSSPQLTIFYGGTISVFNDISPDKAQAIMLCAGN) constitute a Tify domain. The short motif at 220–244 (PQARKASLARFLEKRKERLMSAMPY) is the Jas element. The short motif at 222 to 229 (ARKASLAR) is the Nuclear localization signal element.

It belongs to the TIFY/JAZ family. In terms of assembly, homo- and heterodimer. Interacts with MYC2, MYC3, MYC4, COI1, AFPH2/NINJA, TIFY10A/JAZ1, TIFY10B/JAZ2, TIFY6B/JAZ3, TIFY5A/JAZ8, TIFY9/JAZ10 and TIFY3A/JAZ11. Interacts with RHD6 and RSL1. In terms of processing, ubiquitinated. Targeted for degradation by the SCF(COI1) E3 ubiquitin ligase-proteasome pathway during jasmonate signaling.

Its subcellular location is the nucleus. Repressor of jasmonate responses. Jasmonoyl-isoleucine (JA-Ile) specifically promotes COI1-TIFY7/JAZ9 interaction. Interacts with and suppresses RHD6 and RSL1 transcription factor activities to negatively regulate jasmonate-stimulated root hair development. The protein is Protein TIFY 7 (TIFY7) of Arabidopsis thaliana (Mouse-ear cress).